Consider the following 265-residue polypeptide: Type III pantothenate kinase (265 aa).

Residue 6-13 coordinates ATP; that stretch reads DVGNTNIV. 112-115 is a substrate binding site; the sequence is GADR. Residue aspartate 114 is the Proton acceptor of the active site. Residue aspartate 134 participates in K(+) binding. Residue threonine 137 coordinates ATP. Threonine 189 is a substrate binding site.

The protein belongs to the type III pantothenate kinase family. As to quaternary structure, homodimer. NH4(+) serves as cofactor. The cofactor is K(+).

It localises to the cytoplasm. It catalyses the reaction (R)-pantothenate + ATP = (R)-4'-phosphopantothenate + ADP + H(+). The protein operates within cofactor biosynthesis; coenzyme A biosynthesis; CoA from (R)-pantothenate: step 1/5. Functionally, catalyzes the phosphorylation of pantothenate (Pan), the first step in CoA biosynthesis. The polypeptide is Type III pantothenate kinase (Saccharopolyspora erythraea (strain ATCC 11635 / DSM 40517 / JCM 4748 / NBRC 13426 / NCIMB 8594 / NRRL 2338)).